The primary structure comprises 309 residues: Pantothenate synthetase (309 aa).

Position 2 is an N-acetylthreonine (threonine 2). An ATP-binding site is contributed by methionine 40 to histidine 47. Histidine 47 serves as the catalytic Proton donor. (R)-pantoate is bound at residue glutamine 72. Glutamine 72 contacts beta-alanine. The Mg(2+) site is built by aspartate 88, aspartate 89, and glutamine 92. An ATP-binding site is contributed by glycine 158 to aspartate 161. Glutamine 164 contributes to the (R)-pantoate binding site. ATP-binding positions include valine 187 and methionine 195–arginine 198.

The protein belongs to the pantothenate synthetase family.

Its subcellular location is the cytoplasm. The enzyme catalyses (R)-pantoate + beta-alanine + ATP = (R)-pantothenate + AMP + diphosphate + H(+). It participates in cofactor biosynthesis; (R)-pantothenate biosynthesis; (R)-pantothenate from (R)-pantoate and beta-alanine: step 1/1. Its activity is regulated as follows. Pantothenate exhibits uncompetitive inhibition toward both D-pantoate and ATP, and non-competitive inhibition toward beta-alanine. AMPCPP exhibits competitive inhibition toward ATP, uncompetitive inhibition toward beta-alanine, and non-competitive inhibition toward D-pantoate. The enzyme is most active in the presence of magnesium or manganese. Other divalent cations (cobalt, nickel, zinc) are less effective. Its function is as follows. Catalyzes the condensation of pantoate with beta-alanine in an ATP-dependent reaction via a pantoyl-adenylate intermediate. The chain is Pantothenate synthetase (panC) from Mycobacterium tuberculosis (strain ATCC 25618 / H37Rv).